Reading from the N-terminus, the 92-residue chain is Costars family protein ST45-2 (92 aa).

Position 1 is an N-acetylmethionine (M1).

This sequence belongs to the costars family.

The chain is Costars family protein ST45-2 from Eutrema halophilum (Salt cress).